The following is a 352-amino-acid chain: C-C chemokine receptor type 5 (352 aa).

Over 1-30 the chain is Extracellular; sequence MDYQVSSPTYDIDYYTSEPCQKINVKQIAA. Residue tyrosine 3 is modified to Sulfotyrosine. Residues serine 6 and serine 7 are each glycosylated (O-linked (GalNAc...) serine). Sulfotyrosine occurs at positions 10, 14, and 15. Intrachain disulfides connect cysteine 20-cysteine 269 and cysteine 101-cysteine 178. Residues 31–58 form a helical membrane-spanning segment; sequence RLLPPLYSLVFIFGFVGNILVVLILINC. The Cytoplasmic portion of the chain corresponds to 59 to 68; it reads KRLKSMTDIY. Residues 69–89 traverse the membrane as a helical segment; that stretch reads LLNLAISDLLFLLTVPFWAHY. The Extracellular portion of the chain corresponds to 90–102; it reads AAAQWDFGNTMCQ. The chain crosses the membrane as a helical span at residues 103 to 124; that stretch reads LLTGLYFIGFFSGIFFIILLTI. The Cytoplasmic portion of the chain corresponds to 125–141; sequence DRYLAIVHAVFALKART. A helical transmembrane segment spans residues 142 to 166; sequence VTFGVVTSVITWVVAVFASLPGIIF. Residues 167–198 lie on the Extracellular side of the membrane; that stretch reads TRSQREGLHYTCSSHFPYSQYQFWKNFQTLKM. Residues 199-218 traverse the membrane as a helical segment; that stretch reads VILGLVLPLLVMVICYSGIL. The Cytoplasmic segment spans residues 219–235; that stretch reads KTLLRCRNEKKRHRAVR. Residues 236–260 traverse the membrane as a helical segment; it reads LIFTIMIVYFLFWAPYNIVLLLNTF. Over 261–277 the chain is Extracellular; that stretch reads QEFFGLNNCSSSNRLDQ. A helical membrane pass occupies residues 278–301; that stretch reads AMQVTETLGMTHCCINPIIYAFVG. Residues 302–352 are Cytoplasmic-facing; the sequence is EKFRNYLLVFFQKHIAKRFCKCCSIFQQEAPERASSVYTRSTAEQEISVGL. Residues cysteine 321, cysteine 323, and cysteine 324 are each lipidated (S-palmitoyl cysteine). Phosphoserine; by BARK1 occurs at positions 336, 337, 342, and 349.

Belongs to the G-protein coupled receptor 1 family. As to quaternary structure, interacts with PRAF2. Efficient ligand binding to CCL3/MIP-1alpha and CCL4/MIP-1beta requires sulfation, O-glycosylation and sialic acid modifications. Glycosylation on Ser-6 is required for efficient binding of CCL4. Interacts with GRK2. Interacts with ARRB1 and ARRB2. Interacts with CNIH4. Interacts with S100A4; this interaction stimulates T-lymphocyte chemotaxis. Sulfated on at least 2 of the N-terminal tyrosines. Sulfation is required for efficient binding of the chemokines, CCL3 and CCL4. In terms of processing, palmitoylation in the C-terminal is important for cell surface expression. Post-translationally, phosphorylation on serine residues in the C-terminal is stimulated by binding CC chemokines especially by APO-RANTES. O-glycosylated, but not N-glycosylated. Ser-6 appears to be the major site even if Ser-7 may be also O-glycosylated. Also sialylated glycans present which contribute to chemokine binding. Thr-16 and Ser-17 may also be glycosylated and, if so, with small moieties such as a T-antigen.

Its subcellular location is the cell membrane. In terms of biological role, receptor for a number of inflammatory CC-chemokines including CCL3/MIP-1-alpha, CCL4/MIP-1-beta and RANTES and subsequently transduces a signal by increasing the intracellular calcium ion level. May play a role in the control of granulocytic lineage proliferation or differentiation. Participates in T-lymphocyte migration to the infection site by acting as a chemotactic receptor. In Macaca arctoides (Stump-tailed macaque), this protein is C-C chemokine receptor type 5 (CCR5).